The sequence spans 57 residues: MAVPKKRTSMSKKRIHKNIWKRKGWRAALKAFALAKSLSTGNSKSFFVRQLNNQTLE.

The protein belongs to the bacterial ribosomal protein bL32 family.

Its subcellular location is the plastid. It is found in the chloroplast. The polypeptide is Large ribosomal subunit protein bL32c (Vitis vinifera (Grape)).